The sequence spans 357 residues: Alanine racemase (357 aa).

Lys-33 functions as the Proton acceptor; specific for D-alanine in the catalytic mechanism. Lys-33 bears the N6-(pyridoxal phosphate)lysine mark. Arg-129 lines the substrate pocket. The Proton acceptor; specific for L-alanine role is filled by Tyr-253. Met-301 contributes to the substrate binding site.

This sequence belongs to the alanine racemase family. Pyridoxal 5'-phosphate is required as a cofactor.

The enzyme catalyses L-alanine = D-alanine. It participates in amino-acid biosynthesis; D-alanine biosynthesis; D-alanine from L-alanine: step 1/1. In terms of biological role, catalyzes the interconversion of L-alanine and D-alanine. May also act on other amino acids. In Pseudomonas savastanoi pv. phaseolicola (strain 1448A / Race 6) (Pseudomonas syringae pv. phaseolicola (strain 1448A / Race 6)), this protein is Alanine racemase (alr).